The sequence spans 269 residues: Formamidopyrimidine-DNA glycosylase (269 aa).

Pro-2 acts as the Schiff-base intermediate with DNA in catalysis. The Proton donor role is filled by Glu-3. Lys-57 functions as the Proton donor; for beta-elimination activity in the catalytic mechanism. The DNA site is built by His-90, Arg-109, and Lys-150. The FPG-type zinc finger occupies 235–269; sequence RVYGRNGEPCRTCGTPIETAKHGQRSTFFCRRCQV. Arg-259 serves as the catalytic Proton donor; for delta-elimination activity.

This sequence belongs to the FPG family. Monomer. Zn(2+) serves as cofactor.

It catalyses the reaction Hydrolysis of DNA containing ring-opened 7-methylguanine residues, releasing 2,6-diamino-4-hydroxy-5-(N-methyl)formamidopyrimidine.. The catalysed reaction is 2'-deoxyribonucleotide-(2'-deoxyribose 5'-phosphate)-2'-deoxyribonucleotide-DNA = a 3'-end 2'-deoxyribonucleotide-(2,3-dehydro-2,3-deoxyribose 5'-phosphate)-DNA + a 5'-end 5'-phospho-2'-deoxyribonucleoside-DNA + H(+). Involved in base excision repair of DNA damaged by oxidation or by mutagenic agents. Acts as a DNA glycosylase that recognizes and removes damaged bases. Has a preference for oxidized purines, such as 7,8-dihydro-8-oxoguanine (8-oxoG). Has AP (apurinic/apyrimidinic) lyase activity and introduces nicks in the DNA strand. Cleaves the DNA backbone by beta-delta elimination to generate a single-strand break at the site of the removed base with both 3'- and 5'-phosphates. The sequence is that of Formamidopyrimidine-DNA glycosylase from Pectobacterium atrosepticum (strain SCRI 1043 / ATCC BAA-672) (Erwinia carotovora subsp. atroseptica).